The chain runs to 639 residues: ATP-dependent zinc metalloprotease FtsH (639 aa).

Over 1-20 the chain is Cytoplasmic; the sequence is MNGNNNMNNNGKSNNKKKNK. The helical transmembrane segment at 21–41 threads the bilayer; the sequence is NWILGLVVVFLISAIFMSYFI. Residues 42-120 are Periplasmic-facing; it reads RGGESYKNVP…LSSGKSQASL (79 aa). Residues 121 to 141 form a helical membrane-spanning segment; it reads IGVLLQTLPWILFFIFFFFIF. Topologically, residues 142-639 are cytoplasmic; it reads RQTQGGGGKV…KEVKGEDVKG (498 aa). 212 to 219 serves as a coordination point for ATP; the sequence is GSPGTGKT. Histidine 434 provides a ligand contact to Zn(2+). The active site involves glutamate 435. Zn(2+) is bound by residues histidine 438 and aspartate 510.

In the central section; belongs to the AAA ATPase family. It in the C-terminal section; belongs to the peptidase M41 family. In terms of assembly, homohexamer. Zn(2+) serves as cofactor.

Its subcellular location is the cell inner membrane. Its function is as follows. Acts as a processive, ATP-dependent zinc metallopeptidase for both cytoplasmic and membrane proteins. Plays a role in the quality control of integral membrane proteins. The polypeptide is ATP-dependent zinc metalloprotease FtsH (Borreliella burgdorferi (strain ZS7) (Borrelia burgdorferi)).